Consider the following 344-residue polypeptide: Centromere protein L (344 aa).

Phosphoserine is present on S39. T43 is subject to Phosphothreonine. Phosphoserine is present on S53.

The protein belongs to the CENP-L/IML3 family. Component of the CENPA-CAD complex, composed of CENPI, CENPK, CENPL, CENPO, CENPP, CENPQ, CENPR and CENPS. The CENPA-CAD complex interacts with the CENPA-NAC complex, at least composed of CENPA, CENPC, CENPH, CENPM, CENPN, CENPT and CENPU.

Its subcellular location is the nucleus. It is found in the chromosome. The protein resides in the centromere. Functionally, component of the CENPA-CAD (nucleosome distal) complex, a complex recruited to centromeres which is involved in assembly of kinetochore proteins, mitotic progression and chromosome segregation. May be involved in incorporation of newly synthesized CENPA into centromeres via its interaction with the CENPA-NAC complex. This is Centromere protein L (CENPL) from Homo sapiens (Human).